The sequence spans 502 residues: Mannitol 2-dehydrogenase (502 aa).

Isoleucine 37–alanine 48 is an NAD(+) binding site.

It belongs to the mannitol dehydrogenase family. As to quaternary structure, monomer.

The catalysed reaction is D-mannitol + NAD(+) = D-fructose + NADH + H(+). Catalyzes the NAD(H)-dependent interconversion of D-fructose and D-mannitol in the mannitol metabolic pathway. This is Mannitol 2-dehydrogenase from Aspergillus terreus (strain NIH 2624 / FGSC A1156).